The sequence spans 278 residues: 4-deoxy-L-threo-5-hexosulose-uronate ketol-isomerase (278 aa).

4 residues coordinate Zn(2+): His-196, His-198, Glu-203, and His-245.

Belongs to the KduI family. Zn(2+) serves as cofactor.

It catalyses the reaction 5-dehydro-4-deoxy-D-glucuronate = 3-deoxy-D-glycero-2,5-hexodiulosonate. Its pathway is glycan metabolism; pectin degradation; 2-dehydro-3-deoxy-D-gluconate from pectin: step 4/5. Functionally, catalyzes the isomerization of 5-dehydro-4-deoxy-D-glucuronate to 3-deoxy-D-glycero-2,5-hexodiulosonate. The sequence is that of 4-deoxy-L-threo-5-hexosulose-uronate ketol-isomerase from Shigella boydii serotype 4 (strain Sb227).